The sequence spans 519 residues: Exodeoxyribonuclease 7 large subunit (519 aa).

A disordered region spans residues 493–519 (AISTGKSSNTNRKSAPAREPGKQGSLF). Over residues 496–505 (TGKSSNTNRK) the composition is skewed to polar residues.

This sequence belongs to the XseA family. As to quaternary structure, heterooligomer composed of large and small subunits.

It localises to the cytoplasm. The enzyme catalyses Exonucleolytic cleavage in either 5'- to 3'- or 3'- to 5'-direction to yield nucleoside 5'-phosphates.. Its function is as follows. Bidirectionally degrades single-stranded DNA into large acid-insoluble oligonucleotides, which are then degraded further into small acid-soluble oligonucleotides. In Chelativorans sp. (strain BNC1), this protein is Exodeoxyribonuclease 7 large subunit.